The sequence spans 304 residues: Calcium release-activated calcium channel protein 1 (304 aa).

Residues 1–11 (MHPEPAPPPNN) show a composition bias toward pro residues. The tract at residues 1-49 (MHPEPAPPPNNSNPELPLSGGSSTSGSRRSRRRSGDGEPTGAPPLPPPP) is disordered. At 1 to 88 (MHPEPAPPPN…KLYLSRAKLK (88 aa)) the chain is on the cytoplasmic side. The required for generation of inwardly rectifying CRAC currents stretch occupies residues 3 to 49 (PEPAPPPNNSNPELPLSGGSSTSGSRRSRRRSGDGEPTGAPPLPPPP). Residues 12 to 27 (SNPELPLSGGSSTSGS) show a composition bias toward low complexity. Positions 39-60 (PTGAPPLPPPPAVSYPDWIGQS) are AKAP5 association region. Residues 71–91 (SMQALSWRKLYLSRAKLKASS) are interaction with STIM1. The chain crosses the membrane as a helical span at residues 89–106 (ASSRTSALLSGFAMVAMV). Topologically, residues 107–120 (EVQLDTDHDYPPGL) are extracellular. Residues 121–141 (LIVFSACTTVLVAVHLFALMI) traverse the membrane as a helical segment. Topologically, residues 142–174 (STCILPNIEAVSNVHNLNSVKESPHERMHRHIE) are cytoplasmic. The chain crosses the membrane as a helical span at residues 175–195 (LAWAFSTVIGTLLFLAEVVLL). Residues 196-237 (CWVKFLPLKRQAGQPSPTKPPTEPAVVVANSSNNGGITPGEA) are Extracellular-facing. N-linked (GlcNAc...) asparagine glycosylation occurs at asparagine 225. The chain crosses the membrane as a helical span at residues 238 to 258 (AAIASTAIMVPCGLVFIVFAV). The Cytoplasmic portion of the chain corresponds to 259-304 (HFYRSLVSHKTDRQFQELNELAEFARLQDQLDHRGDHSLTPGTHYA). The tract at residues 275–295 (ELNELAEFARLQDQLDHRGDH) is interaction with STIM1. Threonine 298 is modified (phosphothreonine).

This sequence belongs to the Orai family. In terms of assembly, oligomerizes in homomeric and heteromeric ORAI complexes. Native CRAC channels most likely consist of hexameric ORAI heteromers, implying that diverse ORAI1, ORAI2 and ORAI3 subunit combinations with distinct biophysical properties can operate in a cell-type specific way. ARC channels are heteropentamers consisting of three ORAI1 and two ORAI3 subunits. Interacts with STIM1 and STIM2; this regulates channel activity. Interacts with CALM; this may displace STIM1 and STIM2 and might thereby modulate channel activity. Interacts (via N-terminus) with AKAP5 upon store depletion. Interacts with CRACR2A/EFCAB4B; the interaction is direct and takes place in absence of Ca(2+). Forms a complex with CRACR2A/EFCAB4B and STIM1 at low concentration of Ca(2+), the complex dissociates at elevated Ca(2+) concentrations. Interacts with ASPH (isoform 8). Interacts with SLC35G1. Interacts with UBQLN1. Interacts with ADCY8; interaction is calcium store depletion independent; interaction occurs in membrane raft; interaction increases markedly after store depletion; positively regulates SOCE-induced adenylate cyclase activity; contributes to the targeting of ADCY8 to discrete regions of the plasma membrane that are shielded from other calcium events. Interacts with EFHB; the interaction takes place upon Ca(2+)-store depletion. Interacts (via N- and C-termini) with ATP2C2 (via N-terminus); this interaction regulates Ca(2+) influx at the plasma membrane. Interacts with TSPAN18; this interaction regulates ORAI1 exit from the endoplasmic (ER), and/or Golgi, and trafficking to the cell surface. In terms of processing, N-glycosylated. N-glycosylation inhibits channel activity in T cells. Post-translationally, ubiquitinated. Cys-195 is oxidated, leading to inactivation of channel activity.

It localises to the cell membrane. Its subcellular location is the basolateral cell membrane. The catalysed reaction is Ca(2+)(in) = Ca(2+)(out). Oxidation at Cys-196 leads to inactivation of channel activity. Pore-forming subunit of two major inward rectifying Ca(2+) channels at the plasma membrane: Ca(2+) release-activated Ca(2+) (CRAC) channels and arachidonate-regulated Ca(2+)-selective (ARC) channels. Assembles with ORAI2 and ORAI3 to form hexameric CRAC channels that mediate Ca(2+) influx upon depletion of endoplasmic reticulum Ca(2+) store and channel activation by Ca(2+) sensor STIM1, a process known as store-operated Ca(2+) entry (SOCE). Various pore subunit combinations may account for distinct CRAC channel spatiotemporal and cell-type specific dynamics. ORAI1 mainly contributes to the generation of Ca(2+) plateaus involved in sustained Ca(2+) entry and is dispensable for cytosolic Ca(2+) oscillations, whereas ORAI2 and ORAI3 generate oscillatory patterns. CRAC channels assemble in Ca(2+) signaling microdomains where Ca(2+) influx is coupled to calmodulin and calcineurin signaling and activation of NFAT transcription factors recruited to ORAI1 via AKAP5. Activates NFATC2/NFAT1 and NFATC3/NFAT4-mediated transcriptional responses. CRAC channels are the main pathway for Ca(2+) influx in T cells and promote the immune response to pathogens by activating NFAT-dependent cytokine and chemokine transcription. Assembles with ORAI3 to form channels that mediate store-independent Ca(2+) influx in response to inflammatory metabolites arachidonate or its derivative leukotriene C4, termed ARC and LRC channels respectively. Plays a prominent role in Ca(2+) influx at the basolateral membrane of mammary epithelial cells independently of the Ca(2+) content of endoplasmic reticulum or Golgi stores. May mediate transepithelial transport of large quantities of Ca(2+) for milk secretion. This Rattus norvegicus (Rat) protein is Calcium release-activated calcium channel protein 1 (Orai1).